A 178-amino-acid chain; its full sequence is Ribosome maturation factor RimM (178 aa).

The 79-residue stretch at 100 to 178 (AADEYYWYQL…VMRVEWDADF (79 aa)) folds into the PRC barrel domain.

It belongs to the RimM family. In terms of assembly, binds ribosomal protein uS19.

It localises to the cytoplasm. Its function is as follows. An accessory protein needed during the final step in the assembly of 30S ribosomal subunit, possibly for assembly of the head region. Essential for efficient processing of 16S rRNA. May be needed both before and after RbfA during the maturation of 16S rRNA. It has affinity for free ribosomal 30S subunits but not for 70S ribosomes. The chain is Ribosome maturation factor RimM from Pseudomonas putida (strain W619).